We begin with the raw amino-acid sequence, 85 residues long: Large ribosomal subunit protein bL27 (85 aa).

The interval 1 to 21 (MAHKKAGGSTRNGRDSESKRL) is disordered.

The protein belongs to the bacterial ribosomal protein bL27 family.

This chain is Large ribosomal subunit protein bL27, found in Pseudomonas putida (strain W619).